A 492-amino-acid polypeptide reads, in one-letter code: GTPase Der (492 aa).

2 EngA-type G domains span residues 3–167 (FTLA…EKFE) and 207–382 (LQVA…DVWN). Residues 9–16 (GRPNVGKS), 56–60 (DSAGL), 119–122 (NKSE), 213–220 (GRPNAGKS), 260–264 (DTAGM), and 325–328 (NKWD) contribute to the GTP site. The KH-like domain occupies 383–469 (RRVPTAALNR…RLTLRGQGDK (87 aa)). The interval 461–492 (LTLRGQGDKNPYKGKKKSTPSRLRKHLEGRKS) is disordered. Over residues 472-492 (YKGKKKSTPSRLRKHLEGRKS) the composition is skewed to basic residues.

It belongs to the TRAFAC class TrmE-Era-EngA-EngB-Septin-like GTPase superfamily. EngA (Der) GTPase family. As to quaternary structure, associates with the 50S ribosomal subunit.

Its function is as follows. GTPase that plays an essential role in the late steps of ribosome biogenesis. The sequence is that of GTPase Der from Ruegeria sp. (strain TM1040) (Silicibacter sp.).